Consider the following 136-residue polypeptide: Large-conductance mechanosensitive channel (136 aa).

A run of 2 helical transmembrane segments spans residues 9–29 and 79–99; these read AFASRGNVIDMAVGIIIGAAF and IQTVIDFTIIAFAIFMGLKAI.

This sequence belongs to the MscL family. Homopentamer.

It is found in the cell inner membrane. Functionally, channel that opens in response to stretch forces in the membrane lipid bilayer. May participate in the regulation of osmotic pressure changes within the cell. This chain is Large-conductance mechanosensitive channel, found in Shewanella putrefaciens (strain CN-32 / ATCC BAA-453).